Consider the following 667-residue polypeptide: MGKVIGIDLGTTNSVVAVMEGDDPEVIENAEGSRTTPSVVAYKDDGERLVGAPAKRQAITNPENTVSSIKRFMGRFYDEVEDEIEEVPYEVVRGENDTARVQIGDRKYTPQEISAVVLQKLKQTAEDYLGQEVTDAVITVPAYFNDAQRKATQEAGEIAGLNVQRIINEPTAASLAYGLDDESDQVVAVYDLGGGTFDVSILELGDGVFEVNATYGDTHLGGDNFDKRLIDHIADEFEQDTGIDLRDDPMALQRLKEAAEEAKIELSSAKTTTINLPFITATDEGPQHLNMDLNRATFENLIEDLVEKTVPQMEKALDDAGHSKSDVDEVILVGGSTRVPLVQETVEDFFGKQANKSVNPDEVVSLGAAVQGGVLSGDVDDVLLLDVTPLNLGIETLGGVMTTLIEANTTIPTKESEVFSTAADNQTSVEVHVLQGDREMAKDNRTLGRFHLDGIPPAPRGTPQIEVTFDINADGILNVSAEDKDTGKEQSIRVEANSGLSDEEIEKMKEEAEQHAEEDERRKERADTINEANSMAYSVEQGLEEYGDKIPEDKRSTLQEALDALNEELETASADEDITALEDALEELNAAWSAAGEEIREAQQQQAQQGAAAGAGAGAAGAGAAAGAEGPAGGPTGGPASGNGAADSDEEDVQDADYEVVDEGDDE.

A Phosphothreonine; by autocatalysis modification is found at Thr-196. Disordered stretches follow at residues 495-525 (EANSGLSDEEIEKMKEEAEQHAEEDERRKER) and 595-667 (AGEE…GDDE). The span at 506 to 525 (EKMKEEAEQHAEEDERRKER) shows a compositional bias: basic and acidic residues. The span at 595–612 (AGEEIREAQQQQAQQGAA) shows a compositional bias: low complexity. Over residues 630 to 641 (GPAGGPTGGPAS) the composition is skewed to gly residues. The span at 647 to 667 (DSDEEDVQDADYEVVDEGDDE) shows a compositional bias: acidic residues.

It belongs to the heat shock protein 70 family.

Acts as a chaperone. This Salinibacter ruber (strain DSM 13855 / M31) protein is Chaperone protein DnaK.